We begin with the raw amino-acid sequence, 330 residues long: Virulence plasmid integrase pGP8-D (330 aa).

Positions 39-124 constitute a Core-binding (CB) domain; the sequence is FSLFEVIMHW…SYISLTRFLN (86 aa). The 176-residue stretch at 152-327 folds into the Tyr recombinase domain; the sequence is VKTNAMNRLQ…SREDNASKKM (176 aa). Catalysis depends on residues Arg-189, Lys-214, His-279, Arg-282, and His-305. Tyr-314 serves as the catalytic O-(3'-phospho-DNA)-tyrosine intermediate.

The protein belongs to the 'phage' integrase family.

The protein is Virulence plasmid integrase pGP8-D of Chlamydia muridarum (strain MoPn / Nigg).